We begin with the raw amino-acid sequence, 328 residues long: Lipoate--protein ligase 1 (328 aa).

The region spanning 27-214 (PAEESYFLFY…TIFGETEVEE (188 aa)) is the BPL/LPL catalytic domain. ATP is bound by residues arginine 69, 74 to 77 (GAVY), and lysine 131. Lysine 131 lines the (R)-lipoate pocket.

The enzyme catalyses L-lysyl-[lipoyl-carrier protein] + (R)-lipoate + ATP = N(6)-[(R)-lipoyl]-L-lysyl-[lipoyl-carrier protein] + AMP + diphosphate + H(+). The protein operates within protein modification; protein lipoylation via exogenous pathway; protein N(6)-(lipoyl)lysine from lipoate: step 1/2. Its pathway is protein modification; protein lipoylation via exogenous pathway; protein N(6)-(lipoyl)lysine from lipoate: step 2/2. Catalyzes the lipoylation of proteins, such as GcvH (SAV0833) and GcvH-L (SAV0324), likely via the ATP-dependent activation of lipoate to lipoyl-AMP and the transfer of the activated lipoyl onto the lipoyl domain of the target protein. In Staphylococcus aureus (strain Mu50 / ATCC 700699), this protein is Lipoate--protein ligase 1.